We begin with the raw amino-acid sequence, 209 residues long: Mitochondrial import inner membrane translocase subunit Tim23 (209 aa).

Transmembrane regions (helical) follow at residues 73-93 (FELA…FGAM), 125-145 (ALWA…GVII), and 181-197 (GLAG…YNNW).

The protein belongs to the Tim17/Tim22/Tim23 family. As to quaternary structure, component of the TIM23 complex at least composed of TIMM23, TIMM17 (TIMM17A or TIMM17B) and TIMM50; within this complex, directly interacts with TIMM50. The complex interacts with the TIMM44 component of the PAM complex and with DNAJC15. Upon mitochondrial depolarization, interacts with PINK1; the interaction is required for PINK1 accumulation at the outer mitochondrial membrane, kinase activation by autophosphorylation and PRKN recruitement to mitochondria.

It localises to the mitochondrion inner membrane. Essential component of the TIM23 complex, a complex that mediates the translocation of transit peptide-containing proteins across the mitochondrial inner membrane. Has a role in the activation of stress-induced mitophagy by protecting PINK1 from OMA1-mediated degradation and facilitating its accumulation at the outer mitochondrial membrane in response to depolarization. The polypeptide is Mitochondrial import inner membrane translocase subunit Tim23 (Timm23) (Mus musculus (Mouse)).